Here is a 95-residue protein sequence, read N- to C-terminus: FXYD domain-containing ion transport regulator 6 (95 aa).

The first 18 residues, 1–18, serve as a signal peptide directing secretion; the sequence is MELVLVFLCSLLAPMVLA. The Extracellular segment spans residues 19–35; sequence STAEKEKEMDPFHYDYQ. The chain crosses the membrane as a helical span at residues 36–58; the sequence is TLRIGGLVFAVVLFSVGILLILS. Residues 59 to 95 lie on the Cytoplasmic side of the membrane; the sequence is RRCKCSFNQKPRAPGDEEAQVENLITANATEPQKAEN.

Belongs to the FXYD family. As to quaternary structure, regulatory subunit of the sodium/potassium-transporting ATPase which is composed of a catalytic alpha subunit, a non-catalytic beta subunit and an additional regulatory subunit. The regulatory subunit, a member of the FXYD protein family, modulates the enzymatic activity in a tissue- and isoform-specific way by changing affinities of the Na+/K+-ATPase toward Na(+), K(+) or ATP.

The protein resides in the cell membrane. Its function is as follows. Associates with and regulates the activity of the sodium/potassium-transporting ATPase (NKA) which catalyzes the hydrolysis of ATP coupled with the exchange of Na(+) and K(+) ions across the plasma membrane. Reduces the apparent affinity for intracellular Na(+) with no change in the apparent affinity for extracellular K(+). In addition to modulating NKA kinetics, may also function as a regulator of NKA localization to the plasma membrane. This Macaca fascicularis (Crab-eating macaque) protein is FXYD domain-containing ion transport regulator 6 (FXYD6).